The chain runs to 45 residues: Defensin Tk-AMP-D3 (45 aa).

4 cysteine pairs are disulfide-bonded: Cys3–Cys45, Cys14–Cys34, Cys20–Cys39, and Cys24–Cys41.

In terms of biological role, plant defense peptide. The protein is Defensin Tk-AMP-D3 of Triticum kiharae (Wheat).